Consider the following 418-residue polypeptide: Oxalate:formate antiporter (418 aa).

The next 12 helical transmembrane spans lie at 17-37 (WFYL…QYSW), 48-68 (LGVS…IQAG), 84-104 (IPLM…GMVD), 108-128 (ALYA…GIAM), 141-161 (LASG…LPLI), 172-192 (AAFM…AFVI), 222-242 (FWVL…LVAN), 250-270 (LGLA…FNGG), 288-308 (MSVV…IAAL), 311-331 (VAFI…YALF), 350-370 (FFWA…AAIA), and 378-398 (AFLI…FVIP). Lys-355 lines the oxalate pocket.

The protein belongs to the major facilitator superfamily. OFA (TC 2.A.1.11) family. In terms of assembly, monomer.

It is found in the cell inner membrane. Functionally, anion transporter that carries out the exchange of divalent oxalate with monovalent formate, the product of oxalate decarboxylation, at the plasma membrane, and in doing so catalyzes the vectorial portion of a proton-motive metabolic cycle that drives ATP synthesis. This Oxalobacter formigenes protein is Oxalate:formate antiporter (oxlT).